The sequence spans 292 residues: Ribosomal protein L11 methyltransferase (292 aa).

Residues threonine 136, glycine 159, aspartate 181, and asparagine 228 each coordinate S-adenosyl-L-methionine.

The protein belongs to the methyltransferase superfamily. PrmA family.

The protein resides in the cytoplasm. It carries out the reaction L-lysyl-[protein] + 3 S-adenosyl-L-methionine = N(6),N(6),N(6)-trimethyl-L-lysyl-[protein] + 3 S-adenosyl-L-homocysteine + 3 H(+). In terms of biological role, methylates ribosomal protein L11. The protein is Ribosomal protein L11 methyltransferase of Agrobacterium fabrum (strain C58 / ATCC 33970) (Agrobacterium tumefaciens (strain C58)).